We begin with the raw amino-acid sequence, 465 residues long: Chromosomal replication initiator protein DnaA (465 aa).

The interval 1 to 80 is domain I, interacts with DnaA modulators; sequence MLWTDCLTRL…VEILVDSRPG (80 aa). The segment at 80–127 is domain II; that stretch reads GAILSPAEQPATTTAALSSTPVVPQRVKKEVVEPAATQSNKILNSKKR. The tract at residues 128–345 is domain III, AAA+ region; sequence LLNPLFTFSL…GALNKVVAIA (218 aa). G173, G175, K176, and T177 together coordinate ATP. A domain IV, binds dsDNA region spans residues 346–465; it reads RFKGSQIDLD…YKNLLRLLQS (120 aa).

The protein belongs to the DnaA family. In terms of assembly, oligomerizes as a right-handed, spiral filament on DNA at oriC.

The protein resides in the cytoplasm. Functionally, plays an essential role in the initiation and regulation of chromosomal replication. ATP-DnaA binds to the origin of replication (oriC) to initiate formation of the DNA replication initiation complex once per cell cycle. Binds the DnaA box (a 9 base pair repeat at the origin) and separates the double-stranded (ds)DNA. Forms a right-handed helical filament on oriC DNA; dsDNA binds to the exterior of the filament while single-stranded (ss)DNA is stabiized in the filament's interior. The ATP-DnaA-oriC complex binds and stabilizes one strand of the AT-rich DNA unwinding element (DUE), permitting loading of DNA polymerase. After initiation quickly degrades to an ADP-DnaA complex that is not apt for DNA replication. Binds acidic phospholipids. The sequence is that of Chromosomal replication initiator protein DnaA from Acinetobacter baylyi (strain ATCC 33305 / BD413 / ADP1).